Here is a 72-residue protein sequence, read N- to C-terminus: ATP synthase subunit c (72 aa).

A run of 2 helical transmembrane segments spans residues 5 to 25 and 52 to 72; these read LLAA…IGIA and GLSE…LFVV.

It belongs to the ATPase C chain family. As to quaternary structure, F-type ATPases have 2 components, F(1) - the catalytic core - and F(0) - the membrane proton channel. F(1) has five subunits: alpha(3), beta(3), gamma(1), delta(1), epsilon(1). F(0) has three main subunits: a(1), b(2) and c(10-14). The alpha and beta chains form an alternating ring which encloses part of the gamma chain. F(1) is attached to F(0) by a central stalk formed by the gamma and epsilon chains, while a peripheral stalk is formed by the delta and b chains.

Its subcellular location is the cell membrane. Functionally, f(1)F(0) ATP synthase produces ATP from ADP in the presence of a proton or sodium gradient. F-type ATPases consist of two structural domains, F(1) containing the extramembraneous catalytic core and F(0) containing the membrane proton channel, linked together by a central stalk and a peripheral stalk. During catalysis, ATP synthesis in the catalytic domain of F(1) is coupled via a rotary mechanism of the central stalk subunits to proton translocation. In terms of biological role, key component of the F(0) channel; it plays a direct role in translocation across the membrane. A homomeric c-ring of between 10-14 subunits forms the central stalk rotor element with the F(1) delta and epsilon subunits. This chain is ATP synthase subunit c, found in Clostridium perfringens (strain SM101 / Type A).